Here is a 561-residue protein sequence, read N- to C-terminus: Trehalose-6-phosphate hydrolase (561 aa).

The active-site Nucleophile is the aspartate 203. The Proton donor role is filled by glutamate 254.

It belongs to the glycosyl hydrolase 13 family.

The protein localises to the cytoplasm. It carries out the reaction alpha,alpha-trehalose 6-phosphate + H2O = D-glucose 6-phosphate + D-glucose. Its activity is regulated as follows. Activity is stimulated by high salt concentrations with different efficiencies depending on the kind of salt. In vitro, inhibited by glucose. Functionally, hydrolyzes trehalose-6-phosphate to glucose and glucose 6-phosphate. Can also very effectively hydrolyze p-nitrophenyl-alpha-D-glucopyranoside, but not lactose, maltose, sucrose or sucrose-6-phosphate. Trehalose is also hydrolyzed, but to a much smaller extent than trehalose-6-phosphate. The chain is Trehalose-6-phosphate hydrolase from Bacillus subtilis (strain 168).